The following is a 609-amino-acid chain: Proteasome-associated ATPase (609 aa).

Positions 1–24 (MADSERSEAFGTPDDTPLSSNDAA) are disordered. A coiled-coil region spans residues 19–96 (SSNDAAELEQ…LREEVDRLGQ (78 aa)). Residue 296-301 (GCGKTL) participates in ATP binding. Residues 608–609 (YL) are docks into pockets in the proteasome alpha-ring.

The protein belongs to the AAA ATPase family. Homohexamer. Assembles into a hexameric ring structure that caps the 20S proteasome core. Strongly interacts with the prokaryotic ubiquitin-like protein Pup through a hydrophobic interface; the interacting region of ARC lies in its N-terminal coiled-coil domain. There is one Pup binding site per ARC hexamer ring. Upon ATP-binding, the C-terminus of ARC interacts with the alpha-rings of the proteasome core, possibly by binding to the intersubunit pockets.

It functions in the pathway protein degradation; proteasomal Pup-dependent pathway. Functionally, ATPase which is responsible for recognizing, binding, unfolding and translocation of pupylated proteins into the bacterial 20S proteasome core particle. May be essential for opening the gate of the 20S proteasome via an interaction with its C-terminus, thereby allowing substrate entry and access to the site of proteolysis. Thus, the C-termini of the proteasomal ATPase may function like a 'key in a lock' to induce gate opening and therefore regulate proteolysis. The sequence is that of Proteasome-associated ATPase from Mycobacterium ulcerans (strain Agy99).